A 118-amino-acid chain; its full sequence is Ribosome-binding factor A (118 aa).

Belongs to the RbfA family. As to quaternary structure, monomer. Binds 30S ribosomal subunits, but not 50S ribosomal subunits or 70S ribosomes.

The protein resides in the cytoplasm. One of several proteins that assist in the late maturation steps of the functional core of the 30S ribosomal subunit. Associates with free 30S ribosomal subunits (but not with 30S subunits that are part of 70S ribosomes or polysomes). Required for efficient processing of 16S rRNA. May interact with the 5'-terminal helix region of 16S rRNA. The sequence is that of Ribosome-binding factor A from Bacillus thuringiensis (strain Al Hakam).